Here is a 187-residue protein sequence, read N- to C-terminus: Protein GrpE (187 aa).

Positions 1–31 (MEKKETKNDAEKNNKQDNKSTKSQKKENLNL) are disordered.

It belongs to the GrpE family. As to quaternary structure, homodimer.

The protein localises to the cytoplasm. Its function is as follows. Participates actively in the response to hyperosmotic and heat shock by preventing the aggregation of stress-denatured proteins, in association with DnaK and GrpE. It is the nucleotide exchange factor for DnaK and may function as a thermosensor. Unfolded proteins bind initially to DnaJ; upon interaction with the DnaJ-bound protein, DnaK hydrolyzes its bound ATP, resulting in the formation of a stable complex. GrpE releases ADP from DnaK; ATP binding to DnaK triggers the release of the substrate protein, thus completing the reaction cycle. Several rounds of ATP-dependent interactions between DnaJ, DnaK and GrpE are required for fully efficient folding. This chain is Protein GrpE, found in Borrelia garinii subsp. bavariensis (strain ATCC BAA-2496 / DSM 23469 / PBi) (Borreliella bavariensis).